A 291-amino-acid polypeptide reads, in one-letter code: MKSEAKDGEEESLQTAFKKLRVDASGSIISLSVGEGPSVRASARTAADDTKPKTMCASKDSWHGSTRKSSRGAVRTQRRRRSKSPVLHPPKFIHCSTTAPPSSSQLKHRSQTEPPDGISGRGISTPKEFNAGENSTSLDVNHTGAAIEPLRSSVLRLPSESKTEELSDATQVSQESLTANDLSDFQSVSKLSQGKPCVCVGKECQCKRWHDMEVYSFSGLQNVPPLAPERRSLEDYSQSLHTRTLSGSPRSCSEQARVYVDDVTIEDLAGYMEYYLYIPKKMSHMAEMMYT.

The tract at residues 29–139 (ISLSVGEGPS…NAGENSTSLD (111 aa)) is disordered. The span at 65–83 (STRKSSRGAVRTQRRRRSK) shows a compositional bias: basic residues. The segment covering 95 to 105 (CSTTAPPSSSQ) has biased composition (polar residues). Thr-143 is modified (phosphothreonine).

The polypeptide is Oxidative stress-responsive serine-rich protein 1 (Oser1) (Mus musculus (Mouse)).